The sequence spans 559 residues: Myb/SANT-like DNA-binding domain-containing protein 2 (559 aa).

The tract at residues 1–62 is disordered; that stretch reads MAAPCGSELP…GSAAGSGAAA (62 aa). 5 positions are modified to phosphoserine: Ser13, Ser24, Ser27, Ser32, and Ser48. The segment covering 46–61 has biased composition (low complexity); that stretch reads GASPLGPGSAAGSGAA. One can recognise a Myb-like domain in the interval 103–173; it reads SWTPAETNAL…QCRERIKTLR (71 aa). Residues Lys268 and Lys343 each participate in a glycyl lysine isopeptide (Lys-Gly) (interchain with G-Cter in SUMO2) cross-link. Ser436 carries the post-translational modification Phosphoserine.

The polypeptide is Myb/SANT-like DNA-binding domain-containing protein 2 (Msantd2) (Mus musculus (Mouse)).